We begin with the raw amino-acid sequence, 123 residues long: uncharacterized protein (123 aa).

The segment at 1–24 (MGGGGPPARVQGTEGSQTGGGAVA) is disordered.

This is an uncharacterized protein from Halorubrum pleomorphic virus 1 (HRPV-1).